The sequence spans 265 residues: Photosystem II 22 kDa protein, chloroplastic (265 aa).

A chloroplast-targeting transit peptide spans 1-59 (MAQTMLLTSGVTAGHFLRNKSPLAQPKVHHLFLSGNSPVALPSRRQSFVPLALFKPKTK). Tandem repeats lie at residues 54–158 (FKPK…FVDD) and 159–264 (PPTG…DGEE). 4 helical membrane passes run 96–116 (VAMI…KGIL), 130–150 (AEPL…GALG), 195–215 (LFVG…EIIT), and 229–249 (IPIQ…FFAA).

Belongs to the ELIP/psbS family.

The protein resides in the plastid. It is found in the chloroplast thylakoid membrane. Its function is as follows. Plays an important role in non-photochemical quenching (NPQ), a process maintains the balance between dissipation and utilization of light energy to minimize generation of oxidizing molecules, thereby protecting the plant against photo-oxidative damage; acts upstream of DLDG1. Is not necessary for efficient light harvesting and photosynthesis. The protein is Photosystem II 22 kDa protein, chloroplastic of Arabidopsis thaliana (Mouse-ear cress).